We begin with the raw amino-acid sequence, 141 residues long: Succinate dehydrogenase assembly factor 2, mitochondrial (141 aa).

This sequence belongs to the SDHAF2 family. As to quaternary structure, interacts with the flavoprotein subunit within the SDH catalytic dimer.

Its subcellular location is the mitochondrion matrix. In terms of biological role, plays an essential role in the assembly of succinate dehydrogenase (SDH), an enzyme complex (also referred to as respiratory complex II) that is a component of both the tricarboxylic acid (TCA) cycle and the mitochondrial electron transport chain, and which couples the oxidation of succinate to fumarate with the reduction of ubiquinone (coenzyme Q) to ubiquinol. Required for flavinylation (covalent attachment of FAD) of the flavoprotein subunit of the SDH catalytic dimer. The protein is Succinate dehydrogenase assembly factor 2, mitochondrial of Dictyostelium discoideum (Social amoeba).